Consider the following 268-residue polypeptide: Putative hydro-lyase ACICU_01268 (268 aa).

This sequence belongs to the D-glutamate cyclase family.

The protein is Putative hydro-lyase ACICU_01268 of Acinetobacter baumannii (strain ACICU).